The chain runs to 285 residues: Bifunctional protein FolD (285 aa).

Residues 166–168 (GAS) and Ile232 each bind NADP(+).

Belongs to the tetrahydrofolate dehydrogenase/cyclohydrolase family. In terms of assembly, homodimer.

It carries out the reaction (6R)-5,10-methylene-5,6,7,8-tetrahydrofolate + NADP(+) = (6R)-5,10-methenyltetrahydrofolate + NADPH. The enzyme catalyses (6R)-5,10-methenyltetrahydrofolate + H2O = (6R)-10-formyltetrahydrofolate + H(+). Its pathway is one-carbon metabolism; tetrahydrofolate interconversion. Functionally, catalyzes the oxidation of 5,10-methylenetetrahydrofolate to 5,10-methenyltetrahydrofolate and then the hydrolysis of 5,10-methenyltetrahydrofolate to 10-formyltetrahydrofolate. In Aliivibrio fischeri (strain MJ11) (Vibrio fischeri), this protein is Bifunctional protein FolD.